The sequence spans 527 residues: Bromodomain-containing protein 9 (527 aa).

Residues 1–16 (MNVSVTKRRKKKKKKK) show a composition bias toward basic residues. Positions 1-54 (MNVSVTKRRKKKKKKKSEKEKDKYLDEDERRRRKEEKKRKREKEQCDSEGETEV) are disordered. A compositionally biased stretch (basic and acidic residues) spans 17 to 30 (SEKEKDKYLDEDER). The segment covering 31–41 (RRRKEEKKRKR) has biased composition (basic residues). Residues 78–182 (NESTPLQQLL…HTGFKMMSKA (105 aa)) enclose the Bromo domain. The tract at residues 156-158 (TYN) is histone H4K5ac H4K8ac and histone H4K5bu H4K8bu binding. A compositionally biased stretch (basic and acidic residues) spans 468–478 (DFHDVHNDRGG). The tract at residues 468–527 (DFHDVHNDRGGSRPSSSSSMSNNSERDHHLGSPSRISVGEQQDIHDPYEFLQSPETDNQN) is disordered. The span at 479–490 (SRPSSSSSMSNN) shows a compositional bias: low complexity.

In terms of assembly, binds acetylated histones H3 and H4. Binds butyrylated histone H4.

It localises to the nucleus. Functionally, plays a role in chromatin remodeling and regulation of transcription. Acts as a chromatin reader that recognizes and binds acylated histones: binds histones that are acetylated and/or butyrylated. This is Bromodomain-containing protein 9 (brd9) from Xenopus laevis (African clawed frog).